The sequence spans 546 residues: Probable protein kinase UbiB (546 aa).

In terms of domain architecture, Protein kinase spans 124–502 (DFEIKPLASA…HVRQGQSRYF (379 aa)). ATP contacts are provided by residues 130–138 (LASASIAQV) and Lys-153. The active-site Proton acceptor is the Asp-288. 2 consecutive transmembrane segments (helical) span residues 501–521 (YFLG…VSRP) and 522–542 (EWGL…FVGW).

It belongs to the ABC1 family. UbiB subfamily.

Its subcellular location is the cell inner membrane. Its pathway is cofactor biosynthesis; ubiquinone biosynthesis [regulation]. Is probably a protein kinase regulator of UbiI activity which is involved in aerobic coenzyme Q (ubiquinone) biosynthesis. In Shigella sonnei (strain Ss046), this protein is Probable protein kinase UbiB.